Consider the following 146-residue polypeptide: Large ribosomal subunit protein uL15 (146 aa).

The disordered stretch occupies residues 1–56 (MKLHELKAAEGANKASKRVGRGTGSGLGKTSGRGQNGQNSRSGGGVRPGFEGGQMP). 2 stretches are compositionally biased toward gly residues: residues 21–35 (RGTG…GRGQ) and 42–52 (SGGGVRPGFEG).

This sequence belongs to the universal ribosomal protein uL15 family. As to quaternary structure, part of the 50S ribosomal subunit.

Its function is as follows. Binds to the 23S rRNA. This chain is Large ribosomal subunit protein uL15, found in Clostridium botulinum (strain ATCC 19397 / Type A).